The chain runs to 1802 residues: Non-reducing polyketide synthase nscA (1802 aa).

The tract at residues Asp-27 to His-261 is N-terminal acylcarrier protein transacylase domain (SAT). In terms of domain architecture, Ketosynthase family 3 (KS3) spans Ser-396–Asp-829. Active-site for beta-ketoacyl synthase activity residues include Cys-569, His-704, and His-747. The tract at residues Phe-935 to Arg-1235 is malonyl-CoA:ACP transacylase (MAT) domain. A product template (PT) domain region spans residues Thr-1322–Pro-1641. An N-terminal hotdog fold region spans residues His-1326–Ala-1462. In terms of domain architecture, PKS/mFAS DH spans His-1326–Asp-1636. The active-site Proton acceptor; for dehydratase activity is His-1358. Residues Ala-1490–Asp-1636 are C-terminal hotdog fold. Asp-1547 (proton donor; for dehydratase activity) is an active-site residue. The tract at residues Leu-1699–Ser-1729 is disordered. Residues Thr-1702–Pro-1713 are compositionally biased toward low complexity. One can recognise a Carrier domain in the interval Pro-1725–Cys-1802. Ser-1762 carries the post-translational modification O-(pantetheine 4'-phosphoryl)serine.

Pantetheine 4'-phosphate is required as a cofactor.

It participates in secondary metabolite biosynthesis. Non-reducing polyketide synthase; part of the gene cluster that mediates the biosynthesis of neosartoricin B, a prenylated anthracenone that probably exhibits T-cell antiproliferative activity, suggestive of a physiological role as an immunosuppressive agent. The non-reducing polyketide synthase nscA probably synthesizes and cyclizes the decaketide backbone. The hydrolase nscB then mediates the product release through hydrolysis followed by spontaneous decarboxylation. The prenyltransferase nscD catalyzes the addition of the dimethylallyl group to the aromatic C5. The FAD-dependent monooxygenase nscC is then responsible for the stereospecific hydroxylation at C2. Neosartoricin B can be converted into two additional compounds neosartoricins C and D. Neosartoricin C is a spirocyclic compound that is cyclized through the attack of C3 hydroxyl on C14, followed by dehydration. On the other hand, neosartoricin D is a further cyclized compound in which attack of C2 on C14 in neosartoricin C results in the formation of the acetal-containing dioxabicyclo-octanone ring. Both of these compounds are novel and possibly represent related metabolites of the gene cluster. The chain is Non-reducing polyketide synthase nscA from Trichophyton tonsurans (strain CBS 112818) (Scalp ringworm fungus).